Reading from the N-terminus, the 395-residue chain is Multidrug resistance protein MdtL (395 aa).

The next 12 membrane-spanning stretches (helical) occupy residues 4-24 (FLLCSFALVLLYPAGIDMYLV), 42-62 (IAFSVYLAGMATAMLFAGKIA), 69-89 (PVAIVGALVFMMASLLCSRAS), 93-113 (LFLSGRFLQGVGAGGCYVVAF), 131-151 (LLNGITCIVPVLAPVVGHLIM), 158-178 (SLFYTMSAMGIIVGLLSLFIL), 217-237 (VSVILTFVNASPVLLMEVMGF), 247-267 (ALTAGVSMVVSFSTPFALGLF), 271-291 (TLMLVSQGLFLTAGVTLSLAH), 295-315 (VTLFGLTLICAGFSVGFGVAM), 333-353 (LGIAQVCGSSLWIWLAAILGI), and 358-378 (MLIGILIGCSIVSILLIFSVA).

It belongs to the major facilitator superfamily. DHA1 family. MdtL (TC 2.A.1.2.22) subfamily.

The protein resides in the cell inner membrane. In Salmonella agona (strain SL483), this protein is Multidrug resistance protein MdtL.